Consider the following 254-residue polypeptide: Alcohol dehydrogenase 2 (254 aa).

10-33 (FVAGLGGIGLDTSREIVKSGPKNL) lines the NAD(+) pocket. Ser-138 contacts substrate. The Proton acceptor role is filled by Tyr-151.

The protein belongs to the short-chain dehydrogenases/reductases (SDR) family. As to quaternary structure, homodimer.

The enzyme catalyses a primary alcohol + NAD(+) = an aldehyde + NADH + H(+). It catalyses the reaction a secondary alcohol + NAD(+) = a ketone + NADH + H(+). The sequence is that of Alcohol dehydrogenase 2 (Adh2) from Drosophila hydei (Fruit fly).